The primary structure comprises 208 residues: Small ribosomal subunit protein uS4 (208 aa).

Positions Arg-98–Gly-168 constitute an S4 RNA-binding domain.

This sequence belongs to the universal ribosomal protein uS4 family. Part of the 30S ribosomal subunit. Contacts protein S5. The interaction surface between S4 and S5 is involved in control of translational fidelity.

One of the primary rRNA binding proteins, it binds directly to 16S rRNA where it nucleates assembly of the body of the 30S subunit. In terms of biological role, with S5 and S12 plays an important role in translational accuracy. The polypeptide is Small ribosomal subunit protein uS4 (Desulforapulum autotrophicum (strain ATCC 43914 / DSM 3382 / VKM B-1955 / HRM2) (Desulfobacterium autotrophicum)).